The sequence spans 149 residues: Deoxyuridine 5'-triphosphate nucleotidohydrolase (149 aa).

Substrate contacts are provided by residues 68–70 (RSG), Asn81, 85–87 (TID), and Lys95.

This sequence belongs to the dUTPase family. Mg(2+) serves as cofactor.

The enzyme catalyses dUTP + H2O = dUMP + diphosphate + H(+). The protein operates within pyrimidine metabolism; dUMP biosynthesis; dUMP from dCTP (dUTP route): step 2/2. Its function is as follows. This enzyme is involved in nucleotide metabolism: it produces dUMP, the immediate precursor of thymidine nucleotides and it decreases the intracellular concentration of dUTP so that uracil cannot be incorporated into DNA. The polypeptide is Deoxyuridine 5'-triphosphate nucleotidohydrolase (Bdellovibrio bacteriovorus (strain ATCC 15356 / DSM 50701 / NCIMB 9529 / HD100)).